A 199-amino-acid chain; its full sequence is MSFSPLIRQLIDALRILPGVGQKTAQRMALQLLERDRSGGLRLAQALTRAMEGVGYCRQCRTLTEDELCPQCADPRRDDSLLCVVQSPVDVFAVEQTGFRGRYFVLKGHLSPLDGLGPEAIGIPELLGRVADGAFSEVILATNPTVEGEATAHYIAQMLIPKGLTISRIAHGVPLGGELDLVDGGTLAHALAGRKPISL.

The C4-type zinc finger occupies 57–72; it reads CRQCRTLTEDELCPQC. One can recognise a Toprim domain in the interval 80 to 174; the sequence is SLLCVVQSPV…TISRIAHGVP (95 aa).

The protein belongs to the RecR family.

May play a role in DNA repair. It seems to be involved in an RecBC-independent recombinational process of DNA repair. It may act with RecF and RecO. This chain is Recombination protein RecR, found in Stutzerimonas stutzeri (strain A1501) (Pseudomonas stutzeri).